The chain runs to 212 residues: MAIGLIGRKVGMTRIFNEDGASVPVTVIEIAANRVTQVKTLDTDGYRALQVTTGTKKANRITKPEAGHFAKAGVEAGRGLWELRLADGDGEGIEVGAELNVDIFADIAKVDVTGQSKGKGFQGGIKRWNFHAQDMTHGNSLAHRSNGSIGQNQTPGRVFKGKKMSGHMGAERVTTQNLDIVRVDAERNLLLVKGAVPGATNGDLIIKPAVKA.

Residue glutamine 153 is modified to N5-methylglutamine.

Belongs to the universal ribosomal protein uL3 family. As to quaternary structure, part of the 50S ribosomal subunit. Forms a cluster with proteins L14 and L19. In terms of processing, methylated by PrmB.

One of the primary rRNA binding proteins, it binds directly near the 3'-end of the 23S rRNA, where it nucleates assembly of the 50S subunit. This Shewanella piezotolerans (strain WP3 / JCM 13877) protein is Large ribosomal subunit protein uL3.